Consider the following 118-residue polypeptide: NADH-ubiquinone oxidoreductase chain 3 (118 aa).

3 helical membrane-spanning segments follow: residues I9 to A29, L62 to V82, and I87 to L107.

This sequence belongs to the complex I subunit 3 family.

The protein localises to the mitochondrion membrane. The enzyme catalyses a ubiquinone + NADH + 5 H(+)(in) = a ubiquinol + NAD(+) + 4 H(+)(out). In terms of biological role, core subunit of the mitochondrial membrane respiratory chain NADH dehydrogenase (Complex I) that is believed to belong to the minimal assembly required for catalysis. Complex I functions in the transfer of electrons from NADH to the respiratory chain. The immediate electron acceptor for the enzyme is believed to be ubiquinone. The chain is NADH-ubiquinone oxidoreductase chain 3 (ND3) from Triticum aestivum (Wheat).